The following is a 657-amino-acid chain: Autophagy-related protein 22 (657 aa).

Low complexity predominate over residues 1 to 15 (MAPNLQPQPQSQLQR). The segment at 1–78 (MAPNLQPQPQ…VVPRHFGHDA (78 aa)) is disordered. Over 1-91 (MAPNLQPQPQ…SRRELLGWYA (91 aa)) the chain is Cytoplasmic. The span at 26-40 (GLSNISKRSFRSCAT) shows a compositional bias: polar residues. Residues 92–112 (YAFAAETYVICGIASFIPILL) traverse the membrane as a helical segment. The Vacuolar portion of the chain corresponds to 113 to 155 (ETLARENGVLVSDRKTPCGSSDSKNDGDGQCIVWVFGMEINTA). The helical transmembrane segment at 156-176 (SFAMYTFSVSVLVQALLVVSI) threads the bilayer. The Cytoplasmic portion of the chain corresponds to 177-187 (SCAADHGNYRK). A helical transmembrane segment spans residues 188–208 (KLLLTFAWIGSFAVMSYIFIT). The Vacuolar segment spans residues 209-212 (KDNY). The chain crosses the membrane as a helical span at residues 213 to 233 (ILGALLTVISNTSFGASFVLL). At 234–317 (NSFLPLLVRY…ELELSTRISA (84 aa)) the chain is on the cytoplasmic side. The helical transmembrane segment at 318–338 (IGIGTGYIAALFLQCICIGVL) threads the bilayer. Over 339 to 349 (ISLHNTTWGQR) the chain is Vacuolar. N-linked (GlcNAc...) asparagine glycosylation is present at N343. The helical transmembrane segment at 350-370 (VVLFMVGVWWTVFTIPAAMWL) threads the bilayer. The Cytoplasmic portion of the chain corresponds to 371 to 384 (RPRPGPPLADNGRK). A helical membrane pass occupies residues 385–405 (GIMAGLAYILYAWKSLFKTIQ). The Vacuolar segment spans residues 406–409 (QARR). A helical membrane pass occupies residues 410–430 (LLDIVLFLAGWFLLSDAIATT). At 431–446 (SSTAILFAKTQLHMKP) the chain is on the cytoplasmic side. Residues 447–467 (WALGMINVISTTAGVFGAFGW) form a helical membrane-spanning segment. Residues 468-481 (SWVSRLFNLKAHQT) are Vacuolar-facing. The helical transmembrane segment at 482–502 (ILVCIALFELIPLYGLLGYLP) threads the bilayer. Residues 503–515 (FVKNWGVFGLQQP) are Cytoplasmic-facing. The chain crosses the membrane as a helical span at residues 516–536 (WEMYPLAAVYGVVLGGLSGYC). Residues 537-554 (RSLYGELIPPGSEAAFYA) are Vacuolar-facing. The helical transmembrane segment at 555–575 (LYAITDKGSSVFGPTIVGAII) threads the bilayer. Residues 576–583 (DRTGTIRP) are Cytoplasmic-facing. The helical transmembrane segment at 584-604 (AFWFLAVLVGFPAPLIWFIDV) threads the bilayer. The Vacuolar segment spans residues 605–657 (ERGRREGAKLAKSITDSIVQEEDESDDGAERRGMLSDYEREHGQSIDDERAGR). Residues 615–657 (AKSITDSIVQEEDESDDGAERRGMLSDYEREHGQSIDDERAGR) form a disordered region. Residues 632–657 (GAERRGMLSDYEREHGQSIDDERAGR) are compositionally biased toward basic and acidic residues.

Belongs to the ATG22 family.

The protein localises to the vacuole membrane. Its function is as follows. Vacuolar effluxer which mediate the efflux of leucine and other amino acids resulting from autophagic degradation. The release of autophagic amino acids allows the maintenance of protein synthesis and viability during nitrogen starvation. Autophagy is required for proper vegetative growth, asexual/sexual reproduction, and full virulence. Autophagy is particularly involved in the biosynthesis of deoxynivalenol (DON), an important virulence determinant. This is Autophagy-related protein 22 from Gibberella zeae (strain ATCC MYA-4620 / CBS 123657 / FGSC 9075 / NRRL 31084 / PH-1) (Wheat head blight fungus).